The chain runs to 598 residues: MNAVTIVIASMCILAIAYRLYGTFMMVKVLKVNDDKPTPAHALEDGKDYVPTNKWVSFGHHFAAIAAAGPLVGPILAAQFGYLPGLLWLLIGAVIGGAVHDIVVLFASMRKNGKSLSEVAKDELGPVAGFCTGLSMLFIITITMAGLSMVVLHALERNPWGTFAVGITIPIAMGVGLFYKKTGNLKLASTVGFLFLMAGVFIGPWVQTTALGDFLTLDTKTLAIALPVYAFFAAALPVWLLLAPRDYLSSFMKIGVFIALIVGVFVVNPSIPFPAFTEFVKGGGPVLAGPVWPFISITIACGAISGFHAFVGSGTTPKMLNKWSDMKPVAFGAMLVECLVGIMALIAATALQPADYFAINSTPEVFRTLGMNVVHLPELSGEIGLDLEGRTGGAVTLAVGMTYIFTGMPFFSHLASYFFQFVIMFEAVFILTAIDAGTRVARYLIQDFFGEVYKPLKKTDWIPGSVFASALACLMWGYLLYSGDIGSIWALFGVSNQLMASVGLIIGATIVLKIADKRRYILTCLIPLAYLYVTVNYAGYWMVRNVYLNPEAAGYSVLNGVLSIIMLVLGFIIIVAAVKKWAQMWKDPSLRMEASIPG.

16 consecutive transmembrane segments (helical) span residues 6 to 26 (IVIA…TFMM), 62 to 82 (FAAI…QFGY), 86 to 106 (LLWL…VVLF), 132 to 152 (TGLS…MVVL), 159 to 179 (PWGT…GLFY), 191 to 211 (VGFL…TTAL), 222 to 242 (LAIA…WLLL), 254 to 274 (IGVF…IPFP), 291 to 311 (VWPF…HAFV), 328 to 348 (PVAF…LIAA), 391 to 411 (TGGA…MPFF), 414 to 434 (LASY…LTAI), 461 to 481 (WIPG…YLLY), 488 to 508 (IWAL…IIGA), 521 to 541 (ILTC…AGYW), and 557 to 577 (VLNG…IVAA).

It belongs to the peptide transporter carbon starvation (CstA) (TC 2.A.114) family.

It localises to the cell membrane. Its function is as follows. Involved in peptide utilization. In Bacillus subtilis (strain 168), this protein is Peptide transporter CstA (cstA).